The sequence spans 514 residues: Cytochrome P450 monooxygenase aneD (514 aa).

The helical transmembrane segment at 6–26 threads the bilayer; sequence ICTLLAVIATTSLGLLFLSII. Asn-113, Asn-261, and Asn-347 each carry an N-linked (GlcNAc...) asparagine glycan. Heme is bound at residue Cys-424.

This sequence belongs to the cytochrome P450 family. Heme serves as cofactor.

It localises to the membrane. It catalyses the reaction asperaculane D + reduced [NADPH--hemoprotein reductase] + O2 = asperaculane E + oxidized [NADPH--hemoprotein reductase] + H2O + H(+). It participates in secondary metabolite biosynthesis. Cytochrome P450 monooxygenase; part of the gene cluster that mediates the biosynthesis of aculenes, a unique type of norsesquiterpenes that contain a nordaucane skeleton linked to an L-proline moiety and are of mixed biosynthetic origin. The pathway begins with the synthesis of dauca-4,7-diene by the terpene cyclase aneC using farnesyl pyrophosphate (FPP) as substrate. The cytochrome P450 monooxygenase aneF then performs the initial oxidation at C-12 of dauca-4,7-diene to yield asperaculane D. Asperaculane D is substrate of the cytochrome P450 monooxygenase aneD for C-10 hydroxylation to yield asperaculane E. The cytochrome P450 monooxygenase aneG then converts asperaculane E into aculene D via C-2 oxidation. The monomodular nonribosomal peptide synthtase aneB adenylates L-proline and the thiohydrolase aneE transfers this activated L-proline derivative to aculenes D and C to produce respectively aculenes B and A. The dioxygenase aneA converts aculene D into aculene C, and aculene B into aculene A by introducing the 5,6-alkene moiety. Asperculanes A, B, C and F, as well as 14-prolyl asperculane C, might be shunt products of the pathway. The sequence is that of Cytochrome P450 monooxygenase aneD from Aspergillus aculeatus (strain ATCC 16872 / CBS 172.66 / WB 5094).